A 392-amino-acid polypeptide reads, in one-letter code: Ceramide phosphoethanolamine synthase (392 aa).

Residues 1–10 (MIGPSSQISK) lie on the Lumenal side of the membrane. A helical transmembrane segment spans residues 11–31 (ILLTLLFLLIIFYVFMDVELY). The Cytoplasmic portion of the chain corresponds to 32-140 (LRIHNYAIER…MFDNVIGFSR (109 aa)). The span at 59 to 82 (SESGSGSIGGSSSSSSSSSSSTST) shows a compositional bias: low complexity. The disordered stretch occupies residues 59–91 (SESGSGSIGGSSSSSSSSSSSTSTKLPTAGDRQ). A helical membrane pass occupies residues 141-161 (STFITPNMISFFHVGVACLAG). The Lumenal portion of the chain corresponds to 162–212 (KLVASDSLGYRRLGVLLFQIRTFLDDLDGHVARVRKHIRGERSEIGTSGYY). The helical transmembrane segment at 213-233 (VDGLCDGLGCIALLLGIFFYL) threads the bilayer. Residues 234–271 (KNNPPRRGYSIIPMSDSKLPEPTMMIPKMKATTRKVAK) lie on the Cytoplasmic side of the membrane. A helical membrane pass occupies residues 272-288 (NVISFTGQLLLSSTAWN). The Lumenal portion of the chain corresponds to 289-319 (RYIAVYQNMLEREDVSGNQSHCQDYVFKSTW). Residues 320 to 340 (FFCVAWMWRIVNVHALLHCVL) form a helical membrane-spanning segment. Over 341 to 356 (LSIFCDKLWDFLRAIR) the chain is Cytoplasmic. A helical transmembrane segment spans residues 357–377 (YSGYIILLVAICLTEMHILEA). Residues 378-392 (QNYIFNSTACSNISL) are Lumenal-facing.

It belongs to the CDP-alcohol phosphatidyltransferase class-I family. Requires Mn(2+) as cofactor.

Its subcellular location is the membrane. It is found in the golgi apparatus membrane. The protein resides in the cell membrane. It carries out the reaction CDP-ethanolamine + an N-acylsphing-4-enine = an N-acylsphing-4-enine 1-phosphoethanolamine + CMP + H(+). The catalysed reaction is CDP-ethanolamine + an N-acyl-sphingoid base = an N-acyl-sphingoid 1-phosphoethanolamine + CMP + H(+). Functionally, catalyzes the biosynthesis of ceramide phosphoethanolamine (CPE) through the transfer of a phosphatidyl head group from cytidine 5'-diphosphate (CDP)-ethanolamine on to the primary hydroxyl of ceramide. The sequence is that of Ceramide phosphoethanolamine synthase from Drosophila melanogaster (Fruit fly).